The sequence spans 312 residues: Pantothenate kinase (312 aa).

Gly97 to Ser104 lines the ATP pocket.

This sequence belongs to the prokaryotic pantothenate kinase family.

The protein localises to the cytoplasm. The enzyme catalyses (R)-pantothenate + ATP = (R)-4'-phosphopantothenate + ADP + H(+). It participates in cofactor biosynthesis; coenzyme A biosynthesis; CoA from (R)-pantothenate: step 1/5. This is Pantothenate kinase from Mycobacterium sp. (strain JLS).